The primary structure comprises 270 residues: Formamidopyrimidine-DNA glycosylase (270 aa).

Residue Pro-2 is the Schiff-base intermediate with DNA of the active site. The Proton donor role is filled by Glu-3. The Proton donor; for beta-elimination activity role is filled by Lys-58. The DNA site is built by His-91, Arg-110, and Arg-151. The FPG-type zinc finger occupies Leu-236 to Arg-270. Residue Arg-260 is the Proton donor; for delta-elimination activity of the active site.

It belongs to the FPG family. As to quaternary structure, monomer. The cofactor is Zn(2+).

It carries out the reaction Hydrolysis of DNA containing ring-opened 7-methylguanine residues, releasing 2,6-diamino-4-hydroxy-5-(N-methyl)formamidopyrimidine.. The catalysed reaction is 2'-deoxyribonucleotide-(2'-deoxyribose 5'-phosphate)-2'-deoxyribonucleotide-DNA = a 3'-end 2'-deoxyribonucleotide-(2,3-dehydro-2,3-deoxyribose 5'-phosphate)-DNA + a 5'-end 5'-phospho-2'-deoxyribonucleoside-DNA + H(+). Involved in base excision repair of DNA damaged by oxidation or by mutagenic agents. Acts as a DNA glycosylase that recognizes and removes damaged bases. Has a preference for oxidized purines, such as 7,8-dihydro-8-oxoguanine (8-oxoG). Has AP (apurinic/apyrimidinic) lyase activity and introduces nicks in the DNA strand. Cleaves the DNA backbone by beta-delta elimination to generate a single-strand break at the site of the removed base with both 3'- and 5'-phosphates. The chain is Formamidopyrimidine-DNA glycosylase from Stenotrophomonas maltophilia (strain K279a).